The sequence spans 199 residues: GTP cyclohydrolase-2 (199 aa).

A GTP-binding site is contributed by 49-53; the sequence is RIHSE. 3 residues coordinate Zn(2+): Cys54, Cys65, and Cys67. GTP is bound by residues Gln70, 92–94, and Thr114; that span reads EGR. Asp126 acts as the Proton acceptor in catalysis. The active-site Nucleophile is the Arg128. Thr149 and Lys154 together coordinate GTP.

Belongs to the GTP cyclohydrolase II family. Homodimer. The cofactor is Zn(2+).

The catalysed reaction is GTP + 4 H2O = 2,5-diamino-6-hydroxy-4-(5-phosphoribosylamino)-pyrimidine + formate + 2 phosphate + 3 H(+). Its pathway is cofactor biosynthesis; riboflavin biosynthesis; 5-amino-6-(D-ribitylamino)uracil from GTP: step 1/4. Its function is as follows. Catalyzes the conversion of GTP to 2,5-diamino-6-ribosylamino-4(3H)-pyrimidinone 5'-phosphate (DARP), formate and pyrophosphate. In Blochmanniella floridana, this protein is GTP cyclohydrolase-2.